The sequence spans 542 residues: MANNSPALTGNSQPQHQAAAAVVQQQQQCGGGGATKPAVSGKQGNVLPLWGNEKTMNLNPMILTNILSSPYFKVQLYELKTYHEVVDEIYFKVTHVEPWEKGSRKTAGQTGMCGGVRGVGTGGIVSTAFCLLYKLFTLKLTRKQVMGLITHTDSPYIRALGFMYIRYTQPPTDLWDWFESFLDDEEDLDVKAGGGCVMTIGEMLRSFLTKLEWFSTLFPRIPVPVQKNIDQQIKTRPRKIKKDGKEGVEEIDRHIERRRSRSPRRSLSPRRSPRRSRSRSHHRDGHGSSSFDRELEREKERQRLEREAKEREKERRRSRSLDRGLDRRRSRSRERHRSRSRSRDRKGDRRDRDREREKENERGRRRDRDYDKDRGNDRERDRERSRERSKEQRSRGEGEEKKHKEDKEDRRHRDDKKESKKKHSRSRSRERKHRSRSRSRNAGKRSRSRSKDKASKHKNESKEKSNKRSRSGSQGRTGSVEKRKREHSPSREKSRKRSRSQDRSHKRDHDSKDQSDRQDHQRSQSVEPESQEKEHKNKDETV.

Residues Met1–Ser12 are compositionally biased toward polar residues. Residues Met1–Gln24 form a disordered region. Ala2 is modified (N-acetylalanine). Residue Ser5 is modified to Phosphoserine. Residues Gln13–Gln24 show a composition bias toward low complexity. Lys227 bears the N6-acetyllysine mark. Residues Gln232–Val542 form a disordered region. Positions Asp243–Ile255 are enriched in basic and acidic residues. Positions Glu256 to Asp284 are enriched in basic residues. A phosphoserine mark is found at Ser288, Ser290, Ser318, and Ser320. The span at Phe291 to Arg327 shows a compositional bias: basic and acidic residues. Residues Asp292–Arg323 adopt a coiled-coil conformation. Residues Arg328 to Asp344 show a composition bias toward basic residues. The segment covering Arg345–Glu418 has biased composition (basic and acidic residues). Residues Ser419–Ser448 show a composition bias toward basic residues. A Phosphoserine modification is found at Ser446. The span at Arg449 to Asn466 shows a compositional bias: basic and acidic residues. Ser471, Ser473, and Ser479 each carry phosphoserine. Basic and acidic residues-rich tracts occupy residues Ser479–Glu492 and Arg499–Arg522. A phosphoserine mark is found at Ser523, Ser525, and Ser530. The span at Ser530–Val542 shows a compositional bias: basic and acidic residues.

It belongs to the PRP38 family.

The protein resides in the nucleus. In terms of biological role, may be required for pre-mRNA splicing. This is Pre-mRNA-splicing factor 38B (Prpf38b) from Rattus norvegicus (Rat).